Consider the following 843-residue polypeptide: Protein P (843 aa).

The terminal protein domain (TP) stretch occupies residues 1-177; sequence MPLSYQHFRK…FCGSPYSWEQ (177 aa). The interval 178–346 is spacer; the sequence is DLQHGRLVFQ…YCLSHIVNLI (169 aa). 2 disordered regions span residues 219 to 249 and 290 to 316; these read RKSR…RIHP and STSK…RSQS. The segment covering 290-299 has biased composition (polar residues); the sequence is STSKGHSSSG. A polymerase/reverse transcriptase domain (RT) region spans residues 347–690; it reads EDWGPCAEHG…YMTLYPVARQ (344 aa). Residues 357–600 enclose the Reverse transcriptase domain; the sequence is EHRIRTPRTP…YSLNFMGYVI (244 aa). The Mg(2+) site is built by aspartate 429, aspartate 551, and aspartate 552.

The protein belongs to the hepadnaviridae P protein family.

The enzyme catalyses DNA(n) + a 2'-deoxyribonucleoside 5'-triphosphate = DNA(n+1) + diphosphate. It carries out the reaction Endonucleolytic cleavage to 5'-phosphomonoester.. Its activity is regulated as follows. Activated by host HSP70 and HSP40 in vitro to be able to bind the epsilon loop of the pgRNA. Because deletion of the RNase H region renders the protein partly chaperone-independent, the chaperones may be needed indirectly to relieve occlusion of the RNA-binding site by this domain. Inhibited by several reverse-transcriptase inhibitors: Lamivudine, Adefovir and Entecavir. Functionally, multifunctional enzyme that converts the viral RNA genome into dsDNA in viral cytoplasmic capsids. This enzyme displays a DNA polymerase activity that can copy either DNA or RNA templates, and a ribonuclease H (RNase H) activity that cleaves the RNA strand of RNA-DNA heteroduplexes in a partially processive 3'- to 5'-endonucleasic mode. Neo-synthesized pregenomic RNA (pgRNA) are encapsidated together with the P protein, and reverse-transcribed inside the nucleocapsid. Initiation of reverse-transcription occurs first by binding the epsilon loop on the pgRNA genome, and is initiated by protein priming, thereby the 5'-end of (-)DNA is covalently linked to P protein. Partial (+)DNA is synthesized from the (-)DNA template and generates the relaxed circular DNA (RC-DNA) genome. After budding and infection, the RC-DNA migrates in the nucleus, and is converted into a plasmid-like covalently closed circular DNA (cccDNA). The activity of P protein does not seem to be necessary for cccDNA generation, and is presumably released from (+)DNA by host nuclear DNA repair machinery. In Homo sapiens (Human), this protein is Protein P.